We begin with the raw amino-acid sequence, 77 residues long: Small nuclear ribonucleoprotein G (77 aa).

The region spanning 2–77 (VSTPELKKYM…IISLEALDAI (76 aa)) is the Sm domain.

It belongs to the snRNP Sm proteins family. Component of the Sm core complex, present in spliceosomal snRNP U1, U2, U4/U6 and U5. The core complex contains SMB1, SMD1, SMD2, SMD3, SME1, SMX3 and SMX2 (Sm proteins B, D1, D2, D3, E, F and G, respectively), and is probably a heptameric ring structure. SMX2 specifically interacts with SME1. Belongs to the CWC complex (or CEF1-associated complex), a spliceosome sub-complex reminiscent of a late-stage spliceosome composed of the U2, U5 and U6 snRNAs and at least BUD13, BUD31, BRR2, CDC40, CEF1, CLF1, CUS1, CWC2, CWC15, CWC21, CWC22, CWC23, CWC24, CWC25, CWC27, ECM2, HSH155, IST3, ISY1, LEA1, MSL1, NTC20, PRP8, PRP9, PRP11, PRP19, PRP21, PRP22, PRP45, PRP46, SLU7, SMB1, SMD1, SMD2, SMD3, SMX2, SMX3, SNT309, SNU114, SPP2, SYF1, SYF2, RSE1 and YJU2. Component of the U4/U6-U5 tri-snRNP complex composed of the U4, U6 and U5 snRNAs and at least PRP3, PRP4, PRP6, PRP8, PRP18, PRP31, PRP38, SNU13, SNU23, SNU66, SNU114, SPP381, SMB1, SMD1, SMD2, SMD3, SMX2, SMX3, LSM2, LSM3, LSM4, LSM5, LSM6, LSM7, LSM8, BRR2 and DIB1.

The protein resides in the nucleus. Its subcellular location is the cytoplasm. Functionally, plays a role in pre-mRNA splicing as a core component of the spliceosomal U1, U2, U4 and U5 small nuclear ribonucleoproteins (snRNPs), the building blocks of the spliceosome. The protein is Small nuclear ribonucleoprotein G (SMX2) of Saccharomyces cerevisiae (strain ATCC 204508 / S288c) (Baker's yeast).